The sequence spans 592 residues: Delta-like protein 3 (592 aa).

Positions 1–32 (MVSLQVSPLSQTLILAFLLPQALPAGVFELQI) are cleaved as a signal peptide. At 33–490 (HSFGPGPGLG…LRQADPQRFL (458 aa)) the chain is on the extracellular side. One can recognise a DSL domain in the interval 174-213 (ARCEPPAVGAACARLCRSRSAPSRCGPGLRPCTPFPDECE). EGF-like domains lie at 214–247 (APSV…PLCT), 272–308 (GPGP…LRCE), 310–349 (SGVT…SNCE), 351–387 (RVDR…PRCE), 389–425 (DLDD…RDCR), and 427–463 (RADP…VRCE). Intrachain disulfides connect cysteine 218/cysteine 229, cysteine 222/cysteine 235, cysteine 237/cysteine 246, cysteine 276/cysteine 287, cysteine 281/cysteine 296, cysteine 298/cysteine 307, cysteine 314/cysteine 325, cysteine 319/cysteine 337, cysteine 339/cysteine 348, cysteine 355/cysteine 366, cysteine 360/cysteine 375, cysteine 377/cysteine 386, cysteine 393/cysteine 404, cysteine 398/cysteine 413, cysteine 415/cysteine 424, cysteine 431/cysteine 442, cysteine 436/cysteine 451, and cysteine 453/cysteine 462. Residues 491–511 (LPPALGLLVAAGLAGAALLVI) traverse the membrane as a helical segment. Over 512–592 (HVRRRGPGQD…REDWLIQVLF (81 aa)) the chain is Cytoplasmic. Positions 548–567 (QDGAGDGPSSSADWNHPEDG) are disordered.

In terms of assembly, can bind and activate Notch-1 or another Notch receptor. Ubiquitinated by MIB (MIB1 or MIB2), leading to its endocytosis and subsequent degradation. In terms of tissue distribution, predominantly expressed in the neuroectoderm and paraxial mesoderm during embryogenesis.

It is found in the membrane. Its function is as follows. Inhibits primary neurogenesis. May be required to divert neurons along a specific differentiation pathway. Plays a role in the formation of somite boundaries during segmentation of the paraxial mesoderm. This Mus musculus (Mouse) protein is Delta-like protein 3 (Dll3).